A 310-amino-acid polypeptide reads, in one-letter code: Tagatose-6-phosphate kinase (310 aa).

This sequence belongs to the carbohydrate kinase PfkB family. LacC subfamily.

It catalyses the reaction D-tagatofuranose 6-phosphate + ATP = D-tagatofuranose 1,6-bisphosphate + ADP + H(+). The protein operates within carbohydrate metabolism; D-tagatose 6-phosphate degradation; D-glyceraldehyde 3-phosphate and glycerone phosphate from D-tagatose 6-phosphate: step 1/2. The protein is Tagatose-6-phosphate kinase of Staphylococcus epidermidis (strain ATCC 35984 / DSM 28319 / BCRC 17069 / CCUG 31568 / BM 3577 / RP62A).